A 114-amino-acid polypeptide reads, in one-letter code: Peroxisomal biogenesis factor 39 (114 aa).

Disordered stretches follow at residues 1-26 (MSWWQDMDQRGGVSSPSGALASAEPA) and 53-114 (ITAT…PRVS). Ser-102 is subject to Phosphoserine.

The protein localises to the peroxisome. Its function is as follows. May be a peroxin involved in the PTS2-mediated protein import pathway. This Mus musculus (Mouse) protein is Peroxisomal biogenesis factor 39 (Pex39).